The following is a 232-amino-acid chain: Small ribosomal subunit protein uS3 (232 aa).

Residues V39–R107 form the KH type-2 domain.

This sequence belongs to the universal ribosomal protein uS3 family. As to quaternary structure, part of the 30S ribosomal subunit. Forms a tight complex with proteins S10 and S14.

Functionally, binds the lower part of the 30S subunit head. Binds mRNA in the 70S ribosome, positioning it for translation. This is Small ribosomal subunit protein uS3 from Yersinia pestis bv. Antiqua (strain Antiqua).